Consider the following 481-residue polypeptide: Trichosetin biosynthesis cluster MFS transporter (481 aa).

Positions 1 to 13 (MSTTPQMSQSGFQ) are enriched in polar residues. Positions 1–63 (MSTTPQMSQS…DGPDDPQHPL (63 aa)) are disordered. The segment covering 20–31 (GAREDVGTEAQE) has biased composition (basic and acidic residues). N-linked (GlcNAc...) asparagine glycosylation is present at Asn64. Residues 72 to 92 (LHVGIVSLSTLAANLAATMFA) traverse the membrane as a helical segment. An N-linked (GlcNAc...) asparagine glycan is attached at Asn103. 5 helical membrane-spanning segments follow: residues 111–131 (AMTV…LAPL), 147–167 (VYMA…FLVF), 169–189 (IIAG…VADL), 200–220 (ALFA…GGFV), and 228–248 (WTFR…FALM). A glycan (N-linked (GlcNAc...) asparagine) is linked at Asn252. Helical transmembrane passes span 302–322 (PIVL…FLLF), 353–373 (LLLM…YGWT), 380–400 (WIVP…VVIP), 403–423 (IYLV…ANLL), and 446–466 (GWGN…PWIF).

This sequence belongs to the major facilitator superfamily.

Its subcellular location is the cell membrane. In terms of biological role, efflux pump required for efficient secretion of trichosetin or other secondary metabolies produced by the trichosetin gene cluster. Plays a crucial role in detoxification of the toxic trichosetin in Gibberella fujikuroi cells. This Gibberella fujikuroi (strain CBS 195.34 / IMI 58289 / NRRL A-6831) (Bakanae and foot rot disease fungus) protein is Trichosetin biosynthesis cluster MFS transporter.